The sequence spans 359 residues: Centromere-binding protein 1 (359 aa).

The interval 1–262 (MSGKRSYQDD…SHKEVERRRR (262 aa)) is disordered. Positions 55–78 (KENKENRDGDKVGDDEHDVVKGES) are enriched in basic and acidic residues. Residues 120 to 161 (GDEDEDEDEEEEEDEDDHVDIDDVDKDPDAVIDEDDDEEDED) show a composition bias toward acidic residues. Positions 249–259 (QRKESHKEVER) are enriched in basic and acidic residues. The 49-residue stretch at 249–297 (QRKESHKEVERRRRQNINTAIEKLSDLLPVKETSKAAILSRAAEYIQKM) folds into the bHLH domain.

In terms of assembly, binds DNA as a dimer.

The protein resides in the nucleus. It localises to the chromosome. It is found in the centromere. Its function is as follows. Required for chromosome stability and methionine prototrophy. It is involved in chromosomal segregation. Binds to a highly conserved DNA sequence (5'-RTCACRTG-3'), called CDEI, found in centromeres and in several promoters. This is Centromere-binding protein 1 (CBF1) from Kluyveromyces lactis (strain ATCC 8585 / CBS 2359 / DSM 70799 / NBRC 1267 / NRRL Y-1140 / WM37) (Yeast).